We begin with the raw amino-acid sequence, 394 residues long: Acid ceramidase (394 aa).

The signal sequence occupies residues Met-1–Ala-20. The cysteines at positions 30 and 339 are disulfide-linked. Cys-142 serves as the catalytic Nucleophile. Asn-194, Asn-258, Asn-285, and Asn-341 each carry an N-linked (GlcNAc...) asparagine glycan. Cys-387 and Cys-391 are oxidised to a cystine.

This sequence belongs to the acid ceramidase family. Heterodimer; disulfide-linked. The heterodimer is composed of the disulfide-linked alpha and beta chains produced by autocatalytic cleavage of the precursor. Post-translationally, N-glycosylated. In terms of processing, proteolytically cleaved into two chains alpha and beta that remain associated via a disulfide bond. Cleavage gives rise to a conformation change that activates the enzyme. The same catalytic Cys residue mediates the autoproteolytic cleavage and subsequent hydrolysis of lipid substrates. The beta chain may undergo an additional C-terminal processing.

It is found in the lysosome. It localises to the secreted. It carries out the reaction an N-acylsphing-4-enine + H2O = sphing-4-enine + a fatty acid. It catalyses the reaction N-dodecanoylsphing-4-enine + H2O = dodecanoate + sphing-4-enine. The enzyme catalyses N-tetradecanoylsphing-4-enine + H2O = tetradecanoate + sphing-4-enine. The catalysed reaction is N-hexadecanoylsphing-4-enine + H2O = sphing-4-enine + hexadecanoate. It carries out the reaction N-octadecanoylsphing-4-enine + H2O = sphing-4-enine + octadecanoate. It catalyses the reaction N-dodecanoyl-(4R)-hydroxysphinganine + H2O = (4R)-hydroxysphinganine + dodecanoate. The enzyme catalyses N-(dodecanoyl)-sphinganine + H2O = dodecanoate + sphinganine. The catalysed reaction is N-(acetyl)-sphing-4-enine + H2O = sphing-4-enine + acetate. It carries out the reaction N-(hexanoyl)sphing-4-enine + H2O = hexanoate + sphing-4-enine. It catalyses the reaction N-octanoylsphing-4-enine + H2O = octanoate + sphing-4-enine. The enzyme catalyses N-(9Z-octadecenoyl)-sphing-4-enine + H2O = sphing-4-enine + (9Z)-octadecenoate. The catalysed reaction is N-dodecanoylethanolamine + H2O = dodecanoate + ethanolamine. Its pathway is lipid metabolism; sphingolipid metabolism. Its function is as follows. Lysosomal ceramidase that hydrolyzes sphingolipid ceramides into sphingosine and free fatty acids at acidic pH. Ceramides, sphingosine, and its phosphorylated form sphingosine-1-phosphate are bioactive lipids that mediate cellular signaling pathways regulating several biological processes including cell proliferation, apoptosis and differentiation. Has a higher catalytic efficiency towards C12-ceramides versus other ceramides. Also catalyzes the reverse reaction allowing the synthesis of ceramides from fatty acids and sphingosine. For the reverse synthetic reaction, the natural sphingosine D-erythro isomer is more efficiently utilized as a substrate compared to D-erythro-dihydrosphingosine and D-erythro-phytosphingosine, while the fatty acids with chain lengths of 12 or 14 carbons are the most efficiently used. Also has an N-acylethanolamine hydrolase activity. By regulating the levels of ceramides, sphingosine and sphingosine-1-phosphate in the epidermis, mediates the calcium-induced differentiation of epidermal keratinocytes. Also indirectly regulates tumor necrosis factor/TNF-induced apoptosis. By regulating the intracellular balance between ceramides and sphingosine, in adrenocortical cells, probably also acts as a regulator of steroidogenesis. The sequence is that of Acid ceramidase from Rattus norvegicus (Rat).